The following is a 495-amino-acid chain: Cytochrome P450 monooxygenase aneF (495 aa).

Residues 1 to 21 (MIAGLVLVVLLTKYLQRVFLH) form a helical membrane-spanning segment. An N-linked (GlcNAc...) asparagine glycan is attached at Asn47. Cys437 contacts heme.

The protein belongs to the cytochrome P450 family. Requires heme as cofactor.

The protein localises to the membrane. It catalyses the reaction dauca-4,7-diene + 3 reduced [NADPH--hemoprotein reductase] + 3 O2 = asperaculane D + 3 oxidized [NADPH--hemoprotein reductase] + 4 H2O + 4 H(+). It functions in the pathway secondary metabolite biosynthesis. Its function is as follows. Cytochrome P450 monooxygenase; part of the gene cluster that mediates the biosynthesis of aculenes, a unique type of norsesquiterpenes that contain a nordaucane skeleton linked to an L-proline moiety and are of mixed biosynthetic origin. The pathway begins with the synthesis of dauca-4,7-diene by the terpene cyclase aneC using farnesyl pyrophosphate (FPP) as substrate. The cytochrome P450 monooxygenase aneF then performs the initial oxidation at C-12 of dauca-4,7-diene to yield asperaculane D. Asperaculane D is substrate of the cytochrome P450 monooxygenase aneD for C-10 hydroxylation to yield asperaculane E. The cytochrome P450 monooxygenase aneG then converts asperaculane E into aculene D via C-2 oxidation. The monomodular nonribosomal peptide synthtase aneB adenylates L-proline and the thiohydrolase aneE transfers this activated L-proline derivative to aculenes D and C to produce respectively aculenes B and A. The dioxygenase aneA converts aculene D into aculene C, and aculene B into aculene A by introducing the 5,6-alkene moiety. Asperculanes A, B, C and F, as well as 14-prolyl asperculane C, might be shunt products of the pathway. This chain is Cytochrome P450 monooxygenase aneF, found in Aspergillus aculeatus (strain ATCC 16872 / CBS 172.66 / WB 5094).